Reading from the N-terminus, the 197-residue chain is Phosphoheptose isomerase (197 aa).

In terms of domain architecture, SIS spans 41-197 (VVETFRRGGK…EIVERTLFEE (157 aa)). 56–58 (NGG) serves as a coordination point for substrate. His-65 and Glu-69 together coordinate Zn(2+). Substrate is bound by residues Glu-69, 98 to 99 (ND), 124 to 126 (STS), Ser-129, and Gln-176. The Zn(2+) site is built by Gln-176 and His-184.

The protein belongs to the SIS family. GmhA subfamily. It depends on Zn(2+) as a cofactor.

The protein resides in the cytoplasm. It catalyses the reaction 2 D-sedoheptulose 7-phosphate = D-glycero-alpha-D-manno-heptose 7-phosphate + D-glycero-beta-D-manno-heptose 7-phosphate. Its pathway is carbohydrate biosynthesis; D-glycero-D-manno-heptose 7-phosphate biosynthesis; D-glycero-alpha-D-manno-heptose 7-phosphate and D-glycero-beta-D-manno-heptose 7-phosphate from sedoheptulose 7-phosphate: step 1/1. Its function is as follows. Catalyzes the isomerization of sedoheptulose 7-phosphate in D-glycero-D-manno-heptose 7-phosphate. In Roseiflexus sp. (strain RS-1), this protein is Phosphoheptose isomerase.